Consider the following 760-residue polypeptide: ATP-dependent zinc metalloprotease FtsH (760 aa).

Residues 1 to 5 are Cytoplasmic-facing; that stretch reads MNRKN. The chain crosses the membrane as a helical span at residues 6–26; the sequence is VTRTITAIAVVVLLGWSFFYF. Topologically, residues 27–110 are extracellular; it reads SDDTRGYKPV…KVSTVVNQGS (84 aa). A helical membrane pass occupies residues 111–131; sequence ILGELLVYVLPLLLLVGLFVM. At 132-760 the chain is on the cytoplasmic side; it reads FSRMQGGARM…EVSRTKPAHG (629 aa). Residue 203–210 participates in ATP binding; that stretch reads GPPGTGKT. A Zn(2+)-binding site is contributed by histidine 425. Glutamate 426 is a catalytic residue. Histidine 429 and aspartate 501 together coordinate Zn(2+). The tract at residues 616-760 is disordered; the sequence is DFGGRIPSDK…EVSRTKPAHG (145 aa). Residues 650–669 show a composition bias toward low complexity; the sequence is AFKAAIAQATQAAEAARSDA. Residues 740–750 are compositionally biased toward acidic residues; sequence GSDESSAEQDD.

The protein in the central section; belongs to the AAA ATPase family. In the C-terminal section; belongs to the peptidase M41 family. As to quaternary structure, homohexamer. Zn(2+) is required as a cofactor.

Its subcellular location is the cell membrane. Functionally, acts as a processive, ATP-dependent zinc metallopeptidase for both cytoplasmic and membrane proteins. Plays a role in the quality control of integral membrane proteins. The polypeptide is ATP-dependent zinc metalloprotease FtsH (Mycobacterium bovis (strain ATCC BAA-935 / AF2122/97)).